The sequence spans 424 residues: Ancylostoma secreted protein (424 aa).

A signal peptide spans 1 to 18 (MFSPVIVSVIFTIAFCDA). 2 consecutive SCP domains span residues 41–177 (LDFH…SCIY) and 242–387 (LSVH…VCQY).

It belongs to the CRISP family.

Its subcellular location is the secreted. In terms of biological role, associated with the transition to parasitism by infective hookworm larvae. The protein is Ancylostoma secreted protein (ASP) of Ancylostoma caninum (Dog hookworm).